Here is a 248-residue protein sequence, read N- to C-terminus: Methionine aminopeptidase (248 aa).

H77 lines the substrate pocket. A divalent metal cation contacts are provided by D94, D105, and H169. H176 contacts substrate. A divalent metal cation is bound by residues E202 and E233.

The protein belongs to the peptidase M24A family. Methionine aminopeptidase type 1 subfamily. In terms of assembly, monomer. The cofactor is Co(2+). Zn(2+) is required as a cofactor. Mn(2+) serves as cofactor. Requires Fe(2+) as cofactor.

The catalysed reaction is Release of N-terminal amino acids, preferentially methionine, from peptides and arylamides.. Removes the N-terminal methionine from nascent proteins. The N-terminal methionine is often cleaved when the second residue in the primary sequence is small and uncharged (Met-Ala-, Cys, Gly, Pro, Ser, Thr, or Val). Requires deformylation of the N(alpha)-formylated initiator methionine before it can be hydrolyzed. This chain is Methionine aminopeptidase, found in Mycoplasma genitalium (strain ATCC 33530 / DSM 19775 / NCTC 10195 / G37) (Mycoplasmoides genitalium).